Reading from the N-terminus, the 186-residue chain is Spermidine N(1)-acetyltransferase (186 aa).

Positions Val-7–His-167 constitute an N-acetyltransferase domain. Spermine-binding positions include Met-30, Glu-35, Glu-43, and His-51–Asp-54. Residue Glu-35 coordinates Mg(2+). Residues Glu-35 and Glu-43 each coordinate spermidine. Glu-76 serves as a coordination point for Mg(2+). Position 85 to 87 (Glu-85 to Gln-87) interacts with spermine. Residues Ile-88–Ile-90, Gln-95–Thr-101, and Asn-128–Lys-137 each bind acetyl-CoA. Tyr-135 acts as the Proton donor in catalysis.

Belongs to the acetyltransferase family. As to quaternary structure, homododecamer.

Its subcellular location is the cytoplasm. The enzyme catalyses an alkane-alpha,omega-diamine + acetyl-CoA = an N-acetylalkane-alpha,omega-diamine + CoA + H(+). It carries out the reaction spermidine + acetyl-CoA = N(1)-acetylspermidine + CoA + H(+). It catalyses the reaction spermidine + acetyl-CoA = N(8)-acetylspermidine + CoA + H(+). The catalysed reaction is spermine + acetyl-CoA = N(1)-acetylspermine + CoA + H(+). The protein operates within amine and polyamine degradation; spermidine degradation. It functions in the pathway amine and polyamine degradation; spermine degradation. In terms of biological role, involved in the protection against polyamine toxicity by regulating their concentration. Catalyzes the transfer of an acetyl group from acetyl coenzyme A (AcCoA) to the primary amino groups of spermidine to yield N(1)- and N(8)-acetylspermidine. It can also use spermine. This chain is Spermidine N(1)-acetyltransferase (speG), found in Escherichia coli O157:H7.